A 491-amino-acid chain; its full sequence is Cobyric acid synthase (491 aa).

In terms of domain architecture, GATase cobBQ-type spans 246–432 (RKLIACPILP…VHGLLADAEL (187 aa)). Cys-328 acts as the Nucleophile in catalysis. His-424 is a catalytic residue.

This sequence belongs to the CobB/CobQ family. CobQ subfamily.

The protein operates within cofactor biosynthesis; adenosylcobalamin biosynthesis. Catalyzes amidations at positions B, D, E, and G on adenosylcobyrinic A,C-diamide. NH(2) groups are provided by glutamine, and one molecule of ATP is hydrogenolyzed for each amidation. This Novosphingobium aromaticivorans (strain ATCC 700278 / DSM 12444 / CCUG 56034 / CIP 105152 / NBRC 16084 / F199) protein is Cobyric acid synthase.